The chain runs to 747 residues: DNA topoisomerase 4 subunit A (747 aa).

The Topo IIA-type catalytic domain occupies Leu35–Met498. Catalysis depends on Tyr124, which acts as the O-(5'-phospho-DNA)-tyrosine intermediate.

The protein belongs to the type II topoisomerase GyrA/ParC subunit family. ParC type 1 subfamily. As to quaternary structure, heterotetramer composed of ParC and ParE.

It is found in the cell membrane. It carries out the reaction ATP-dependent breakage, passage and rejoining of double-stranded DNA.. Its function is as follows. Topoisomerase IV is essential for chromosome segregation. It relaxes supercoiled DNA. Performs the decatenation events required during the replication of a circular DNA molecule. The polypeptide is DNA topoisomerase 4 subunit A (Haemophilus influenzae (strain ATCC 51907 / DSM 11121 / KW20 / Rd)).